The sequence spans 391 residues: MEEDRLVFETSKGVEPIASFAEMGIKDDLLRGVYQYGFEKPSAIQQRAVLPIISGRDVIAQAQSGTGKTSMIALTVCQIVDTKSSEVQALILSPTRELAAQTEKVILAIGDYINVQAHACIGGKSVGEDIRKLEHGVQVVSGTPGRVCDMIKRRTLRTRGIKLLILDESDEMLSRGFKDQIYDVYRYLPPELQVVLISATLPNEILEITSKFMTDPVRILVKRDELTLEGIKQFFVAVEKEEWKFDTLCDLYDTLTITQAVIFCNTKRKVDWLTSKMRENNFTVSSMHGDMPQKERDAIMAEFRGGTTRVLITTDVWARGLDVQQVSLVINYDLPNNRELYIHRIGRSGRFGRKGVAINFVKSDDIKILRDIEQYYSTQIDEMPMNVADLI.

The Q motif motif lies at 18 to 46 (ASFAEMGIKDDLLRGVYQYGFEKPSAIQQ). The 171-residue stretch at 49-219 (VLPIISGRDV…SKFMTDPVRI (171 aa)) folds into the Helicase ATP-binding domain. 62 to 69 (AQSGTGKT) contributes to the ATP binding site. A DEAD box motif is present at residues 167 to 170 (DESD). The 162-residue stretch at 230–391 (GIKQFFVAVE…EMPMNVADLI (162 aa)) folds into the Helicase C-terminal domain.

This sequence belongs to the DEAD box helicase family. eIF4A subfamily. As to quaternary structure, eIF4F is a multi-subunit complex, the composition of which varies with external and internal environmental conditions. It is composed of at least EIF4A, EIF4E and EIF4G.

It carries out the reaction ATP + H2O = ADP + phosphate + H(+). Functionally, ATP-dependent RNA helicase which is a subunit of the eIF4F complex involved in cap recognition and is required for mRNA binding to ribosome. In the current model of translation initiation, eIF4A unwinds RNA secondary structures in the 5'-UTR of mRNAs which is necessary to allow efficient binding of the small ribosomal subunit, and subsequent scanning for the initiator codon. This is Eukaryotic initiation factor 4A-3 from Nicotiana plumbaginifolia (Leadwort-leaved tobacco).